A 333-amino-acid chain; its full sequence is DNA-directed RNA polymerase subunit alpha (333 aa).

The tract at residues 1–233 (MVREKVKVST…NLFIPFLHVE (233 aa)) is alpha N-terminal domain (alpha-NTD). The segment at 267–333 (LVFQYIFIDQ…LEKNRKFISN (67 aa)) is alpha C-terminal domain (alpha-CTD).

It belongs to the RNA polymerase alpha chain family. As to quaternary structure, in plastids the minimal PEP RNA polymerase catalytic core is composed of four subunits: alpha, beta, beta', and beta''. When a (nuclear-encoded) sigma factor is associated with the core the holoenzyme is formed, which can initiate transcription.

The protein resides in the plastid. It is found in the chloroplast. The enzyme catalyses RNA(n) + a ribonucleoside 5'-triphosphate = RNA(n+1) + diphosphate. Functionally, DNA-dependent RNA polymerase catalyzes the transcription of DNA into RNA using the four ribonucleoside triphosphates as substrates. This chain is DNA-directed RNA polymerase subunit alpha, found in Aethionema grandiflorum (Persian stone-cress).